The following is a 427-amino-acid chain: Isocitrate lyase (427 aa).

A substrate-binding site is contributed by 89-91; the sequence is SGW. Residue aspartate 150 participates in Mg(2+) binding. Cysteine 188 (proton acceptor) is an active-site residue. Residues 189 to 190, arginine 225, 310 to 314, and threonine 344 contribute to the substrate site; these read GH and NCSPS.

The protein belongs to the isocitrate lyase/PEP mutase superfamily. Isocitrate lyase family. Homotetramer. Mg(2+) is required as a cofactor.

It carries out the reaction D-threo-isocitrate = glyoxylate + succinate. Its pathway is carbohydrate metabolism; glyoxylate cycle; (S)-malate from isocitrate: step 1/2. Involved in the metabolic adaptation in response to environmental changes. Catalyzes the reversible formation of succinate and glyoxylate from isocitrate, a key step of the glyoxylate cycle, which operates as an anaplerotic route for replenishing the tricarboxylic acid cycle during growth on fatty acid substrates. This Halalkalibacterium halodurans (strain ATCC BAA-125 / DSM 18197 / FERM 7344 / JCM 9153 / C-125) (Bacillus halodurans) protein is Isocitrate lyase (aceA).